Reading from the N-terminus, the 267-residue chain is tRNA pseudouridine synthase A (267 aa).

The active-site Nucleophile is the aspartate 51. Tyrosine 109 serves as a coordination point for substrate.

Belongs to the tRNA pseudouridine synthase TruA family. Homodimer.

It catalyses the reaction uridine(38/39/40) in tRNA = pseudouridine(38/39/40) in tRNA. Functionally, formation of pseudouridine at positions 38, 39 and 40 in the anticodon stem and loop of transfer RNAs. In Staphylococcus aureus (strain Mu3 / ATCC 700698), this protein is tRNA pseudouridine synthase A.